A 441-amino-acid polypeptide reads, in one-letter code: MREIVHVQVGQCGNQIGAKFWEVISHEHGVDTNGTYFGNKDNQIEKIDVYYNEVSGNRFVPRAVLVDLEPGTMDSVRASNYGRLFRPDNFVFGQSGAGNNWAKGHYTEGAELIESAMDIIRKESEQCECLQGFQIAHSLGGGTGSGMGTLLISKIREEYPDRMMCTYSVVPSPKVSDTVVEPYNCTLSIHQLVENADEVFCIDNEALYDICFRTLKLVTPSYGDLNHLVSAVMSGITCSLRFPGQLNADLRKLAVNLVPFPRLHFFMVGFAPLGSRGSQQYRSMTVNDLTQQMFDSKNMMAACDPKNGRYLTAAAYFRGKISTKEVDDQMIEIQNKQSEHFVEWIPHNIKSSVCDIPPKGMKMSAAFIGNSTSIQELFKRVGEQFQAMFRRKAFLHWYTGEGMDEMEFTEAESNMQDLVSEYQQYQDAKMDNDAFEDQDLY.

Glutamine 11, glutamate 69, serine 138, glycine 142, threonine 143, glycine 144, asparagine 204, and asparagine 226 together coordinate GTP. A Mg(2+)-binding site is contributed by glutamate 69.

This sequence belongs to the tubulin family. Dimer of alpha and beta chains. A typical microtubule is a hollow water-filled tube with an outer diameter of 25 nm and an inner diameter of 15 nM. Alpha-beta heterodimers associate head-to-tail to form protofilaments running lengthwise along the microtubule wall with the beta-tubulin subunit facing the microtubule plus end conferring a structural polarity. Microtubules usually have 13 protofilaments but different protofilament numbers can be found in some organisms and specialized cells. It depends on Mg(2+) as a cofactor.

Functionally, tubulin is the major constituent of microtubules, a cylinder consisting of laterally associated linear protofilaments composed of alpha- and beta-tubulin heterodimers. Microtubules grow by the addition of GTP-tubulin dimers to the microtubule end, where a stabilizing cap forms. Below the cap, tubulin dimers are in GDP-bound state, owing to GTPase activity of alpha-tubulin. The protein is Tubulin beta chain, nucleomorph (tubB) of Guillardia theta (Cryptophyte).